The primary structure comprises 148 residues: uncharacterized protein (148 aa).

Residues K55–P148 form a disordered region. Over residues R68–E104 the composition is skewed to polar residues.

This is an uncharacterized protein from Homo sapiens (Human).